The following is a 290-amino-acid chain: ATP synthase gamma chain (290 aa).

Belongs to the ATPase gamma chain family. In terms of assembly, F-type ATPases have 2 components, CF(1) - the catalytic core - and CF(0) - the membrane proton channel. CF(1) has five subunits: alpha(3), beta(3), gamma(1), delta(1), epsilon(1). CF(0) has three main subunits: a, b and c.

It localises to the cell inner membrane. Functionally, produces ATP from ADP in the presence of a proton gradient across the membrane. The gamma chain is believed to be important in regulating ATPase activity and the flow of protons through the CF(0) complex. This is ATP synthase gamma chain from Chelativorans sp. (strain BNC1).